Reading from the N-terminus, the 203-residue chain is Small ribosomal subunit protein uS4 (203 aa).

Positions 93-156 (QRLDNVVFRL…MKVPAILEAV (64 aa)) constitute an S4 RNA-binding domain.

This sequence belongs to the universal ribosomal protein uS4 family. In terms of assembly, part of the 30S ribosomal subunit. Contacts protein S5. The interaction surface between S4 and S5 is involved in control of translational fidelity.

Functionally, one of the primary rRNA binding proteins, it binds directly to 16S rRNA where it nucleates assembly of the body of the 30S subunit. With S5 and S12 plays an important role in translational accuracy. In Lactococcus lactis subsp. lactis (strain IL1403) (Streptococcus lactis), this protein is Small ribosomal subunit protein uS4.